Consider the following 100-residue polypeptide: MGALRPWHIAVLVVVLILLFGAKRLPDAARSLGRSLRIIKAETKSLHDDDRDLAEKADAQAGYQPMPPQVQQGQHPQQSPYPAPPQQQPVVDPVQRTRDS.

The helical transmembrane segment at 1–21 (MGALRPWHIAVLVVVLILLFG) threads the bilayer. The segment covering 46-58 (LHDDDRDLAEKAD) has biased composition (basic and acidic residues). Residues 46–100 (LHDDDRDLAEKADAQAGYQPMPPQVQQGQHPQQSPYPAPPQQQPVVDPVQRTRDS) are disordered. Residues 69-78 (QVQQGQHPQQ) are compositionally biased toward low complexity.

It belongs to the TatA/E family. The Tat system comprises two distinct complexes: a TatABC complex, containing multiple copies of TatA, TatB and TatC subunits, and a separate TatA complex, containing only TatA subunits. Substrates initially bind to the TatABC complex, which probably triggers association of the separate TatA complex to form the active translocon.

The protein localises to the cell membrane. Functionally, part of the twin-arginine translocation (Tat) system that transports large folded proteins containing a characteristic twin-arginine motif in their signal peptide across membranes. TatA could form the protein-conducting channel of the Tat system. The sequence is that of Sec-independent protein translocase protein TatA from Salinispora tropica (strain ATCC BAA-916 / DSM 44818 / JCM 13857 / NBRC 105044 / CNB-440).